A 301-amino-acid chain; its full sequence is Acetyl-coenzyme A carboxylase carboxyl transferase subunit beta (301 aa).

Residues 25-294 (LWIKDPSTGE…NSDAPEHEKT (270 aa)) enclose the CoA carboxyltransferase N-terminal domain. Residues 282–301 (QPGNSDAPEHEKTEATDKAA) are disordered. The segment covering 288-301 (APEHEKTEATDKAA) has biased composition (basic and acidic residues).

It belongs to the AccD/PCCB family. Acetyl-CoA carboxylase is a heterohexamer composed of biotin carboxyl carrier protein (AccB), biotin carboxylase (AccC) and two subunits each of ACCase subunit alpha (AccA) and ACCase subunit beta (AccD).

The protein localises to the cytoplasm. The catalysed reaction is N(6)-carboxybiotinyl-L-lysyl-[protein] + acetyl-CoA = N(6)-biotinyl-L-lysyl-[protein] + malonyl-CoA. It participates in lipid metabolism; malonyl-CoA biosynthesis; malonyl-CoA from acetyl-CoA: step 1/1. In terms of biological role, component of the acetyl coenzyme A carboxylase (ACC) complex. Biotin carboxylase (BC) catalyzes the carboxylation of biotin on its carrier protein (BCCP) and then the CO(2) group is transferred by the transcarboxylase to acetyl-CoA to form malonyl-CoA. The polypeptide is Acetyl-coenzyme A carboxylase carboxyl transferase subunit beta (Brucella anthropi (strain ATCC 49188 / DSM 6882 / CCUG 24695 / JCM 21032 / LMG 3331 / NBRC 15819 / NCTC 12168 / Alc 37) (Ochrobactrum anthropi)).